Here is a 470-residue protein sequence, read N- to C-terminus: Methylenetetrahydrofolate--tRNA-(uracil-5-)-methyltransferase TrmFO (470 aa).

Residue 10 to 15 participates in FAD binding; the sequence is GAGLAG.

It belongs to the MnmG family. TrmFO subfamily. FAD serves as cofactor.

The protein localises to the cytoplasm. It carries out the reaction uridine(54) in tRNA + (6R)-5,10-methylene-5,6,7,8-tetrahydrofolate + NADH + H(+) = 5-methyluridine(54) in tRNA + (6S)-5,6,7,8-tetrahydrofolate + NAD(+). The enzyme catalyses uridine(54) in tRNA + (6R)-5,10-methylene-5,6,7,8-tetrahydrofolate + NADPH + H(+) = 5-methyluridine(54) in tRNA + (6S)-5,6,7,8-tetrahydrofolate + NADP(+). Functionally, catalyzes the folate-dependent formation of 5-methyl-uridine at position 54 (M-5-U54) in all tRNAs. This is Methylenetetrahydrofolate--tRNA-(uracil-5-)-methyltransferase TrmFO from Prochlorococcus marinus (strain MIT 9301).